Here is a 204-residue protein sequence, read N- to C-terminus: Large ribosomal subunit protein bL9 (204 aa).

The segment at 180–204 (DDIGGAASDDEGDAPAAAADEEESK) is disordered. Residues 187 to 204 (SDDEGDAPAAAADEEESK) show a composition bias toward acidic residues.

This sequence belongs to the bacterial ribosomal protein bL9 family.

Binds to the 23S rRNA. This is Large ribosomal subunit protein bL9 from Ruegeria sp. (strain TM1040) (Silicibacter sp.).